We begin with the raw amino-acid sequence, 72 residues long: UPF0154 protein LBA1278 (72 aa).

The helical transmembrane segment at 3-23 (LGLAIFLIIIALLVGATAGFY) threads the bilayer.

Belongs to the UPF0154 family.

Its subcellular location is the cell membrane. The chain is UPF0154 protein LBA1278 from Lactobacillus acidophilus (strain ATCC 700396 / NCK56 / N2 / NCFM).